Reading from the N-terminus, the 612-residue chain is Dihydroxy-acid dehydratase (612 aa).

Aspartate 81 is a binding site for Mg(2+). Cysteine 122 contacts [2Fe-2S] cluster. Residues aspartate 123 and lysine 124 each coordinate Mg(2+). Position 124 is an N6-carboxylysine (lysine 124). Position 195 (cysteine 195) interacts with [2Fe-2S] cluster. Glutamate 491 contacts Mg(2+). The active-site Proton acceptor is serine 517.

It belongs to the IlvD/Edd family. In terms of assembly, homodimer. [2Fe-2S] cluster is required as a cofactor. Mg(2+) serves as cofactor.

The enzyme catalyses (2R)-2,3-dihydroxy-3-methylbutanoate = 3-methyl-2-oxobutanoate + H2O. It carries out the reaction (2R,3R)-2,3-dihydroxy-3-methylpentanoate = (S)-3-methyl-2-oxopentanoate + H2O. It participates in amino-acid biosynthesis; L-isoleucine biosynthesis; L-isoleucine from 2-oxobutanoate: step 3/4. The protein operates within amino-acid biosynthesis; L-valine biosynthesis; L-valine from pyruvate: step 3/4. Functionally, functions in the biosynthesis of branched-chain amino acids. Catalyzes the dehydration of (2R,3R)-2,3-dihydroxy-3-methylpentanoate (2,3-dihydroxy-3-methylvalerate) into 2-oxo-3-methylpentanoate (2-oxo-3-methylvalerate) and of (2R)-2,3-dihydroxy-3-methylbutanoate (2,3-dihydroxyisovalerate) into 2-oxo-3-methylbutanoate (2-oxoisovalerate), the penultimate precursor to L-isoleucine and L-valine, respectively. The chain is Dihydroxy-acid dehydratase from Buchnera aphidicola subsp. Baizongia pistaciae (strain Bp).